A 1414-amino-acid chain; its full sequence is DNA-directed RNA polymerase subunit beta' (1414 aa).

Zn(2+)-binding residues include Cys70, Cys72, Cys85, and Cys88. 3 residues coordinate Mg(2+): Asp461, Asp463, and Asp465. The Zn(2+) site is built by Cys820, Cys894, Cys901, and Cys904.

This sequence belongs to the RNA polymerase beta' chain family. As to quaternary structure, the RNAP catalytic core consists of 2 alpha, 1 beta, 1 beta' and 1 omega subunit. When a sigma factor is associated with the core the holoenzyme is formed, which can initiate transcription. Requires Mg(2+) as cofactor. It depends on Zn(2+) as a cofactor.

The catalysed reaction is RNA(n) + a ribonucleoside 5'-triphosphate = RNA(n+1) + diphosphate. Its function is as follows. DNA-dependent RNA polymerase catalyzes the transcription of DNA into RNA using the four ribonucleoside triphosphates as substrates. This Cupriavidus taiwanensis (strain DSM 17343 / BCRC 17206 / CCUG 44338 / CIP 107171 / LMG 19424 / R1) (Ralstonia taiwanensis (strain LMG 19424)) protein is DNA-directed RNA polymerase subunit beta'.